The chain runs to 265 residues: Speedy protein E8 (265 aa).

A disordered region spans residues 1–80 (MGQILGKIMM…EPEKELAPEP (80 aa)). Positions 66–80 (DESDDEPEKELAPEP) are enriched in acidic residues.

The protein belongs to the Speedy/Ringo family.

In Homo sapiens (Human), this protein is Speedy protein E8.